The sequence spans 219 residues: Cytidylate kinase (219 aa).

Position 21-29 (21-29 (GPAASGKGT)) interacts with ATP.

The protein belongs to the cytidylate kinase family. Type 1 subfamily.

The protein resides in the cytoplasm. It catalyses the reaction CMP + ATP = CDP + ADP. The enzyme catalyses dCMP + ATP = dCDP + ADP. The chain is Cytidylate kinase from Rickettsia prowazekii (strain Madrid E).